A 228-amino-acid chain; its full sequence is Translation initiation factor 6 (228 aa).

In terms of biological role, binds to the 50S ribosomal subunit and prevents its association with the 30S ribosomal subunit to form the 70S initiation complex. In Methanocaldococcus jannaschii (strain ATCC 43067 / DSM 2661 / JAL-1 / JCM 10045 / NBRC 100440) (Methanococcus jannaschii), this protein is Translation initiation factor 6.